The chain runs to 605 residues: uncharacterized protein (605 aa).

The disordered stretch occupies residues 111–151; it reads VNVNDGKPNDIELSSTSKTENDPPLSLHTTPDDLQGNGVNV.

It localises to the golgi apparatus. This is an uncharacterized protein from Schizosaccharomyces pombe (strain 972 / ATCC 24843) (Fission yeast).